Here is a 51-residue protein sequence, read N- to C-terminus: MRHHQNMHYAPQQQPVYVQQPPPRRESGGCCRTCCHFLCCLCLINLCCDVF.

A disordered region spans residues 1–28; that stretch reads MRHHQNMHYAPQQQPVYVQQPPPRRESG.

It belongs to the CYSTM1 family. Post-translationally, palmitoylated near the C-terminus.

It is found in the cell membrane. In Saccharomyces cerevisiae (strain ATCC 204508 / S288c) (Baker's yeast), this protein is Lipid-anchored plasma membrane protein CPP3.